We begin with the raw amino-acid sequence, 218 residues long: 4-coumaroyl-homoserine lactone synthase (218 aa).

This sequence belongs to the autoinducer synthase family.

It carries out the reaction 4-coumaroyl-CoA + S-adenosyl-L-methionine = N-(4-coumaroyl)-L-homoserine lactone + S-methyl-5'-thioadenosine + CoA + H(+). Catalyzes the synthesis of 4-coumaroyl-homoserine lactone, a quorum-sensing (QS) autoinducer molecule which binds to RpaR transcriptional regulator to regulate expression of QS-dependent genes. In Rhodopseudomonas palustris (strain ATCC BAA-98 / CGA009), this protein is 4-coumaroyl-homoserine lactone synthase.